A 223-amino-acid chain; its full sequence is MTQDEMKQAVARAAIEYVVPGEIIGVGTGSTANFFIDELGKIKDRIKGAVASSEATAQRLKSHGIAVFDLNEIDAMSVYIDGADEITAQGAMIKGGGAALTREKIVASVAKQFVCIADGSKLVDLLGNFPLPVEVIPMAQAVVARKLAALGGEPRLRLKDGKPLVTDNGCFIIDVLGLKIQDPAELEAQINNIVGVVTVGLFARRGADIALLGTAEGVKRLTF.

Substrate is bound by residues 28–31 (TGST), 81–84 (DGAD), and 94–97 (KGGG). The active-site Proton acceptor is the E103. Substrate is bound at residue K121.

The protein belongs to the ribose 5-phosphate isomerase family. Homodimer.

The enzyme catalyses aldehydo-D-ribose 5-phosphate = D-ribulose 5-phosphate. It functions in the pathway carbohydrate degradation; pentose phosphate pathway; D-ribose 5-phosphate from D-ribulose 5-phosphate (non-oxidative stage): step 1/1. In terms of biological role, catalyzes the reversible conversion of ribose-5-phosphate to ribulose 5-phosphate. In Herminiimonas arsenicoxydans, this protein is Ribose-5-phosphate isomerase A.